Here is a 906-residue protein sequence, read N- to C-terminus: Probable RNA-directed DNA polymerase from transposon BS (906 aa).

Residues 482–758 (AILRVQFFPK…SQAKYLGITL (277 aa)) enclose the Reverse transcriptase domain.

The cofactor is Mg(2+). It depends on Mn(2+) as a cofactor.

The enzyme catalyses DNA(n) + a 2'-deoxyribonucleoside 5'-triphosphate = DNA(n+1) + diphosphate. In Drosophila melanogaster (Fruit fly), this protein is Probable RNA-directed DNA polymerase from transposon BS.